The following is a 338-amino-acid chain: uncharacterized protein (338 aa).

Residues 20–40 (IFFTLTFSLSNLFLAICYLFL) traverse the membrane as a helical segment.

It localises to the membrane. This is an uncharacterized protein from Schizosaccharomyces pombe (strain 972 / ATCC 24843) (Fission yeast).